A 642-amino-acid polypeptide reads, in one-letter code: 1-deoxy-D-xylulose-5-phosphate synthase (642 aa).

Thiamine diphosphate is bound by residues His-79 and 120–122; that span reads AHS. Asp-155 is a Mg(2+) binding site. Residues 156-157, Asn-184, Tyr-293, and Glu-375 each bind thiamine diphosphate; that span reads GS. A Mg(2+)-binding site is contributed by Asn-184.

Belongs to the transketolase family. DXPS subfamily. As to quaternary structure, homodimer. The cofactor is Mg(2+). Requires thiamine diphosphate as cofactor.

It catalyses the reaction D-glyceraldehyde 3-phosphate + pyruvate + H(+) = 1-deoxy-D-xylulose 5-phosphate + CO2. The protein operates within metabolic intermediate biosynthesis; 1-deoxy-D-xylulose 5-phosphate biosynthesis; 1-deoxy-D-xylulose 5-phosphate from D-glyceraldehyde 3-phosphate and pyruvate: step 1/1. Functionally, catalyzes the acyloin condensation reaction between C atoms 2 and 3 of pyruvate and glyceraldehyde 3-phosphate to yield 1-deoxy-D-xylulose-5-phosphate (DXP). The sequence is that of 1-deoxy-D-xylulose-5-phosphate synthase from Ruegeria pomeroyi (strain ATCC 700808 / DSM 15171 / DSS-3) (Silicibacter pomeroyi).